Reading from the N-terminus, the 327-residue chain is E3 ubiquitin-protein ligase SINAT4 (327 aa).

Positions 1-27 (METDSMECVSSTGNEIHQNGNGHQSYQ) are disordered. Positions 8–27 (CVSSTGNEIHQNGNGHQSYQ) are enriched in polar residues. The RING-type zinc finger occupies 64 to 100 (CPVCTYSMYPPIHQCHNGHTLCSTCKVRVHNRCPTCR). The tract at residues 114–307 (VAESLELPCK…KELKLRVTGK (194 aa)) is SBD. An SIAH-type zinc finger spans residues 117 to 177 (SLELPCKFYN…LVAHLRDDHK (61 aa)). 8 residues coordinate Zn(2+): cysteine 122, cysteine 129, histidine 141, cysteine 145, cysteine 152, cysteine 159, histidine 171, and histidine 176.

Belongs to the SINA (Seven in absentia) family. Interacts with SINAT6. Interacts with WAV3. Interacts with FREE1. Interacts with ELC/VPS23A.

It is found in the endosome. Its subcellular location is the multivesicular body. The protein localises to the cytoplasmic vesicle. It localises to the autophagosome. The enzyme catalyses S-ubiquitinyl-[E2 ubiquitin-conjugating enzyme]-L-cysteine + [acceptor protein]-L-lysine = [E2 ubiquitin-conjugating enzyme]-L-cysteine + N(6)-ubiquitinyl-[acceptor protein]-L-lysine.. Its pathway is protein modification; protein ubiquitination. Its function is as follows. E3 ubiquitin-protein ligase that mediates ubiquitination and subsequent proteasomal degradation of target proteins. E3 ubiquitin ligases accept ubiquitin from an E2 ubiquitin-conjugating enzyme in the form of a thioester and then directly transfers the ubiquitin to targeted substrates. It probably triggers the ubiquitin-mediated degradation of different substrates. Modulates directly the ubiquitination and proteasomal-dependent degradation of FREE1, a component of the ESCRT-I complex. Modulates directly the ubiquitination and proteasomal-dependent degradation of ELC/VPS23A, a component of the ESCRT-I complex. The polypeptide is E3 ubiquitin-protein ligase SINAT4 (Arabidopsis thaliana (Mouse-ear cress)).